The sequence spans 433 residues: C2H2 type master regulator of conidiophore development brlA (433 aa).

Disordered regions lie at residues Pro23–His64 and Lys240–Arg265. The segment covering Thr30–Ser48 has biased composition (low complexity). Residues Lys240–Ser264 show a composition bias toward polar residues. 2 consecutive C2H2-type zinc fingers follow at residues Phe321 to His345 and His351 to His376. The tract at residues Glu391–Leu416 is disordered.

It localises to the nucleus. BrlA, abaA and wetA are pivotal regulators of conidiophore development and conidium maturation. They act individually and together to regulate their own expression and that of numerous other sporulation-specific genes. Binds promoters of target genes at brlA response elements (BREs) containing the conserved sequence 5'-(C/A)(A/G)AGGG(G/A)-3'. Is not required for penicillin V production. This is C2H2 type master regulator of conidiophore development brlA from Penicillium rubens (strain ATCC 28089 / DSM 1075 / NRRL 1951 / Wisconsin 54-1255) (Penicillium chrysogenum).